Consider the following 127-residue polypeptide: Phosphoribosyl-AMP cyclohydrolase (127 aa).

A Mg(2+)-binding site is contributed by Asp96. Residue Cys97 participates in Zn(2+) binding. Residues Asp98 and Asp100 each contribute to the Mg(2+) site. Residues Cys113 and Cys120 each contribute to the Zn(2+) site.

The protein belongs to the PRA-CH family. Homodimer. Mg(2+) serves as cofactor. Requires Zn(2+) as cofactor.

It localises to the cytoplasm. The enzyme catalyses 1-(5-phospho-beta-D-ribosyl)-5'-AMP + H2O = 1-(5-phospho-beta-D-ribosyl)-5-[(5-phospho-beta-D-ribosylamino)methylideneamino]imidazole-4-carboxamide. Its pathway is amino-acid biosynthesis; L-histidine biosynthesis; L-histidine from 5-phospho-alpha-D-ribose 1-diphosphate: step 3/9. Catalyzes the hydrolysis of the adenine ring of phosphoribosyl-AMP. In Corynebacterium jeikeium (strain K411), this protein is Phosphoribosyl-AMP cyclohydrolase.